The sequence spans 249 residues: Triosephosphate isomerase (249 aa).

Positions 12 and 14 each coordinate substrate. Position 14 is an N6-acetyllysine (lysine 14). A 3'-nitrotyrosine modification is found at tyrosine 68. At serine 80 the chain carries Phosphoserine. The active-site Electrophile is histidine 96. Serine 106 carries the phosphoserine modification. Lysine 142 is covalently cross-linked (Glycyl lysine isopeptide (Lys-Gly) (interchain with G-Cter in SUMO1)). An N6-succinyllysine modification is found at lysine 149. Lysine 156 carries the N6-acetyllysine; alternate modification. Lysine 156 carries the post-translational modification N6-succinyllysine; alternate. Phosphoserine is present on serine 159. Residue glutamate 166 is the Proton acceptor of the active site. The residue at position 173 (threonine 173) is a Phosphothreonine. Lysine 194 carries the N6-acetyllysine; alternate modification. N6-succinyllysine; alternate is present on lysine 194. Position 194 is an N6-methyllysine; alternate (lysine 194). Residue serine 198 is modified to Phosphoserine. At tyrosine 209 the chain carries 3'-nitrotyrosine. Serine 212 carries the post-translational modification Phosphoserine. Residue threonine 214 is modified to Phosphothreonine. Serine 223 is modified (phosphoserine). An N6-acetyllysine modification is found at lysine 238.

It belongs to the triosephosphate isomerase family. As to quaternary structure, homodimer.

The protein resides in the cytoplasm. It catalyses the reaction dihydroxyacetone phosphate = methylglyoxal + phosphate. It carries out the reaction D-glyceraldehyde 3-phosphate = dihydroxyacetone phosphate. Its pathway is carbohydrate degradation; glycolysis; D-glyceraldehyde 3-phosphate from glycerone phosphate: step 1/1. It functions in the pathway carbohydrate biosynthesis; gluconeogenesis. Its function is as follows. Triosephosphate isomerase is an extremely efficient metabolic enzyme that catalyzes the interconversion between dihydroxyacetone phosphate (DHAP) and D-glyceraldehyde-3-phosphate (G3P) in glycolysis and gluconeogenesis. It is also responsible for the non-negligible production of methylglyoxal a reactive cytotoxic side-product that modifies and can alter proteins, DNA and lipids. The chain is Triosephosphate isomerase (TPI1) from Canis lupus familiaris (Dog).